The chain runs to 166 residues: NAD(P)H-quinone oxidoreductase subunit I, chloroplastic (166 aa).

4Fe-4S ferredoxin-type domains lie at 55–84 (GRIH…VDWK) and 95–124 (LNYS…MTEE). [4Fe-4S] cluster contacts are provided by Cys64, Cys67, Cys70, Cys74, Cys104, Cys107, Cys110, and Cys114.

It belongs to the complex I 23 kDa subunit family. NDH is composed of at least 16 different subunits, 5 of which are encoded in the nucleus. Requires [4Fe-4S] cluster as cofactor.

The protein resides in the plastid. Its subcellular location is the chloroplast thylakoid membrane. The catalysed reaction is a plastoquinone + NADH + (n+1) H(+)(in) = a plastoquinol + NAD(+) + n H(+)(out). It carries out the reaction a plastoquinone + NADPH + (n+1) H(+)(in) = a plastoquinol + NADP(+) + n H(+)(out). In terms of biological role, NDH shuttles electrons from NAD(P)H:plastoquinone, via FMN and iron-sulfur (Fe-S) centers, to quinones in the photosynthetic chain and possibly in a chloroplast respiratory chain. The immediate electron acceptor for the enzyme in this species is believed to be plastoquinone. Couples the redox reaction to proton translocation, and thus conserves the redox energy in a proton gradient. This is NAD(P)H-quinone oxidoreductase subunit I, chloroplastic from Calea megacephala.